The chain runs to 146 residues: Large ribosomal subunit protein uL15 (146 aa).

A compositionally biased stretch (basic and acidic residues) spans 1 to 13 (MKLHELKPAEGSR). Residues 1-52 (MKLHELKPAEGSRKVRNRVGRGIGSGNGKTAGKGHKGQNARSGGGVRLGFEG) are disordered. Composition is skewed to gly residues over residues 21-31 (RGIGSGNGKTA) and 42-52 (SGGGVRLGFEG).

This sequence belongs to the universal ribosomal protein uL15 family. In terms of assembly, part of the 50S ribosomal subunit.

Functionally, binds to the 23S rRNA. The polypeptide is Large ribosomal subunit protein uL15 (Bacillus cereus (strain B4264)).